Here is a 99-residue protein sequence, read N- to C-terminus: Malonate decarboxylase acyl carrier protein (99 aa).

The residue at position 25 (Ser-25) is an O-(phosphoribosyl dephospho-coenzyme A)serine.

The protein belongs to the MdcC family. Post-translationally, covalently binds the prosthetic group of malonate decarboxylase.

It localises to the cytoplasm. In terms of biological role, subunit of malonate decarboxylase, it is an acyl carrier protein to which acetyl and malonyl thioester residues are bound via a 2'-(5''-phosphoribosyl)-3'-dephospho-CoA prosthetic group and turn over during the catalytic mechanism. This is Malonate decarboxylase acyl carrier protein from Pseudomonas syringae pv. syringae (strain B728a).